We begin with the raw amino-acid sequence, 281 residues long: ATP phosphoribosyltransferase (281 aa).

The protein belongs to the ATP phosphoribosyltransferase family. Long subfamily. Requires Mg(2+) as cofactor.

The protein localises to the cytoplasm. The enzyme catalyses 1-(5-phospho-beta-D-ribosyl)-ATP + diphosphate = 5-phospho-alpha-D-ribose 1-diphosphate + ATP. The protein operates within amino-acid biosynthesis; L-histidine biosynthesis; L-histidine from 5-phospho-alpha-D-ribose 1-diphosphate: step 1/9. Feedback inhibited by histidine. Functionally, catalyzes the condensation of ATP and 5-phosphoribose 1-diphosphate to form N'-(5'-phosphoribosyl)-ATP (PR-ATP). Has a crucial role in the pathway because the rate of histidine biosynthesis seems to be controlled primarily by regulation of HisG enzymatic activity. The polypeptide is ATP phosphoribosyltransferase (Salinispora tropica (strain ATCC BAA-916 / DSM 44818 / JCM 13857 / NBRC 105044 / CNB-440)).